Reading from the N-terminus, the 140-residue chain is Large ribosomal subunit protein bL17 (140 aa).

Belongs to the bacterial ribosomal protein bL17 family. In terms of assembly, part of the 50S ribosomal subunit. Contacts protein L32.

This Hyphomonas neptunium (strain ATCC 15444) protein is Large ribosomal subunit protein bL17.